Here is a 94-residue protein sequence, read N- to C-terminus: Translation initiation factor IF-1 (94 aa).

The S1-like domain maps to 1–72 (MAKEELIQFE…EKGRLIFRHK (72 aa)). The tract at residues 71–94 (HKDERPGGTGAPRSGPPRGQFRRR) is disordered.

The protein belongs to the IF-1 family. In terms of assembly, component of the 30S ribosomal translation pre-initiation complex which assembles on the 30S ribosome in the order IF-2 and IF-3, IF-1 and N-formylmethionyl-tRNA(fMet); mRNA recruitment can occur at any time during PIC assembly.

It localises to the cytoplasm. One of the essential components for the initiation of protein synthesis. Stabilizes the binding of IF-2 and IF-3 on the 30S subunit to which N-formylmethionyl-tRNA(fMet) subsequently binds. Helps modulate mRNA selection, yielding the 30S pre-initiation complex (PIC). Upon addition of the 50S ribosomal subunit IF-1, IF-2 and IF-3 are released leaving the mature 70S translation initiation complex. This chain is Translation initiation factor IF-1, found in Rhodopseudomonas palustris (strain HaA2).